A 143-amino-acid chain; its full sequence is Large ribosomal subunit protein uL11 (143 aa).

The protein belongs to the universal ribosomal protein uL11 family. In terms of assembly, part of the ribosomal stalk of the 50S ribosomal subunit. Interacts with L10 and the large rRNA to form the base of the stalk. L10 forms an elongated spine to which L12 dimers bind in a sequential fashion forming a multimeric L10(L12)X complex. Post-translationally, one or more lysine residues are methylated.

Forms part of the ribosomal stalk which helps the ribosome interact with GTP-bound translation factors. The sequence is that of Large ribosomal subunit protein uL11 from Sphingopyxis alaskensis (strain DSM 13593 / LMG 18877 / RB2256) (Sphingomonas alaskensis).